We begin with the raw amino-acid sequence, 622 residues long: Galactolipid galactosyltransferase SFR2, chloroplastic (622 aa).

Residues 1–3 lie on the Stromal side of the membrane; the sequence is MEL. Residues 4–24 traverse the membrane as a helical; Signal-anchor segment; it reads FALLIKVAGLLATVTVGANVV. At 25–622 the chain is on the cytoplasmic side; that stretch reads SYSRFRRQNL…LHPALASPFD (598 aa). A beta-D-glucoside contacts are provided by residues His-222, 266–267, Tyr-377, Glu-429, Trp-467, 474–475, and Phe-483; these read NE and EW. Glu-267 serves as the catalytic Proton donor. Catalysis depends on Glu-429, which acts as the Nucleophile.

This sequence belongs to the glycosyl hydrolase 1 family. As to expression, expressed in hypocotyls, cotyledons, stems, leaves, pedicels, sepals, anthers and pistils. Limited expression in roots. Not detected in petals or filaments.

The protein localises to the plastid. The protein resides in the chloroplast. Its subcellular location is the chloroplast outer membrane. It catalyses the reaction 2 a 1,2-diacyl-3-O-(beta-D-galactosyl)-sn-glycerol = a 1,2-diacyl-3-O-[beta-D-galactosyl-(1-&gt;6)-beta-D-galactosyl]-sn-glycerol + a 1,2-diacyl-sn-glycerol. Induced by MgCl(2). Glycosyl hydrolase family protein acting primarily as a highly specific galactosyltransferase. Synthesizes digalactosyldiacylglycerol from monogalactosyldiacylglycerol in the absence of UDP-galactose in vitro. Hydrolyzes o- and p-nitrophenyl beta-D-glucoside in vitro. Plays a role in freezing tolerance. May play a role in chloroplast protection. This chain is Galactolipid galactosyltransferase SFR2, chloroplastic, found in Arabidopsis thaliana (Mouse-ear cress).